Here is a 213-residue protein sequence, read N- to C-terminus: uncharacterized protein (213 aa).

Glycine 53, glutamate 74, and aspartate 96 together coordinate S-adenosyl-L-methionine.

This sequence belongs to the methyltransferase superfamily. YrrT family.

Functionally, could be a S-adenosyl-L-methionine-dependent methyltransferase. This is an uncharacterized protein from Bacillus pumilus (strain SAFR-032).